We begin with the raw amino-acid sequence, 444 residues long: MVDHISPRASPGPIRSSQTRRARKLRDSCTSCASSKVRCTKEKPACARCIERGLACQYMVSKRMGRNPRAPSPLDSTRRPSESLPSAGSEQGLPAHNTYSTPHAHTQAHTHAHSHPQPHPQSHPQSNQPPHALPTPNGSSSVSAIFSHQSPPPLVETQGLGGDLAGQAQSTLSSLTVDSEFGGSLQSMEHGNHADFLAESTGSLFDAFLEVGTPMIDPFLESAPLPPFQARYCCFSLALQTLTCLFPHAPLGCQLRLTDGEDSSCNLMTTDMVISGNKKATDAVRKILGCSCAQDGYLLSMVVLIVLKVLGWYAAAAGTQCTSTAAGGETNSGSCSNSPATVSSGCLTEERVLHHPSMVGEDCVDEEDQPRVAAQLVLSELHRVQSLANLLAKRLQEGGDDAAGIPAHHPASPFSLLGFSGLEANLRHRLRAVSSDIIDYLHRE.

Positions 1 to 26 are disordered; the sequence is MVDHISPRASPGPIRSSQTRRARKLR. Residues 29–56 constitute a DNA-binding region (zn(2)-C6 fungal-type); the sequence is CTSCASSKVRCTKEKPACARCIERGLAC. Positions 64 to 167 are disordered; sequence MGRNPRAPSP…QGLGGDLAGQ (104 aa). Residues 106–116 are compositionally biased toward basic residues; sequence TQAHTHAHSHP. Over residues 120–130 the composition is skewed to low complexity; sequence PQSHPQSNQPP. A compositionally biased stretch (polar residues) spans 136 to 149; that stretch reads PNGSSSVSAIFSHQ.

Interacts with its co-regulator aflS.

It is found in the nucleus. Its subcellular location is the endosome. In terms of biological role, transcription factor involved in regulation of the aflatoxin biosynthesis gene cluster. Binds with its co-regulator aflS to AFLR1 elements (5'-TCGSWNNSCGR-3') present in the promoters of the aflatoxin cluster genes. The ratio of the expression data between aflS:aflR plays a crucial role in the regulation of aflatoxins production. A high ratio, produced at a range between 17 and 30 degrees Celsius, corresponds with the production profile of aflatoxin G1 biosynthesis. A low ratio, produced over 30 degrees Celsius, is related to aflatoxin B1 biosynthesis. The chain is Aflatoxin biosynthesis regulatory protein from Aspergillus parasiticus (strain ATCC 56775 / NRRL 5862 / SRRC 143 / SU-1).